Here is a 601-residue protein sequence, read N- to C-terminus: Elongation factor 4 (601 aa).

Residues 2–184 (DLIRNFSIIA…EMIARVPPPT (183 aa)) enclose the tr-type G domain. GTP is bound by residues 14 to 19 (DHGKST) and 131 to 134 (NKID).

This sequence belongs to the TRAFAC class translation factor GTPase superfamily. Classic translation factor GTPase family. LepA subfamily.

The protein localises to the cell inner membrane. The enzyme catalyses GTP + H2O = GDP + phosphate + H(+). Required for accurate and efficient protein synthesis under certain stress conditions. May act as a fidelity factor of the translation reaction, by catalyzing a one-codon backward translocation of tRNAs on improperly translocated ribosomes. Back-translocation proceeds from a post-translocation (POST) complex to a pre-translocation (PRE) complex, thus giving elongation factor G a second chance to translocate the tRNAs correctly. Binds to ribosomes in a GTP-dependent manner. This Polynucleobacter necessarius subsp. necessarius (strain STIR1) protein is Elongation factor 4.